We begin with the raw amino-acid sequence, 86 residues long: U15-lycotoxin-Ls1a (86 aa).

The N-terminal stretch at 1 to 20 (MNSKIFAVLFLLAFLSCVLS) is a signal peptide. Residues 21–66 (DQYCPKSSITACKKMNIRNDCCKDDDCTGGSWCCATPCGNFCKYPT) form the WAP domain. 5 disulfides stabilise this stretch: Cys24/Cys54, Cys32/Cys58, Cys41/Cys53, Cys42/Cys80, and Cys47/Cys62.

It belongs to the venom protein 11 family. 01 (wap-1) subfamily. Post-translationally, contains 5 disulfide bonds. Expressed by the venom gland.

It is found in the secreted. In terms of biological role, has antibacterial activity. The protein is U15-lycotoxin-Ls1a of Lycosa singoriensis (Wolf spider).